Consider the following 76-residue polypeptide: Putative antitoxin VapB2 (76 aa).

It belongs to the UPF0330 family.

Possibly the antitoxin component of a type II toxin-antitoxin (TA) system. Its cognate toxin is VapC2 (Potential). This chain is Putative antitoxin VapB2 (vapB2), found in Pyrococcus abyssi (strain GE5 / Orsay).